We begin with the raw amino-acid sequence, 339 residues long: uncharacterized protein (339 aa).

The 231-residue stretch at 13–243 (LSLNKLDVGF…PATPFICEFI (231 aa)) folds into the ABC transporter domain. An ATP-binding site is contributed by 45–52 (GPSGSGKS).

The protein belongs to the ABC transporter superfamily.

The protein resides in the cell inner membrane. In terms of biological role, probably part of a binding-protein-dependent transport system y4fNOP. Probably responsible for energy coupling to the transport system. This is an uncharacterized protein from Sinorhizobium fredii (strain NBRC 101917 / NGR234).